Consider the following 116-residue polypeptide: Large ribosomal subunit protein uL18 (116 aa).

This sequence belongs to the universal ribosomal protein uL18 family. As to quaternary structure, part of the 50S ribosomal subunit; part of the 5S rRNA/L5/L18/L25 subcomplex. Contacts the 5S and 23S rRNAs.

Its function is as follows. This is one of the proteins that bind and probably mediate the attachment of the 5S RNA into the large ribosomal subunit, where it forms part of the central protuberance. This chain is Large ribosomal subunit protein uL18, found in Shewanella amazonensis (strain ATCC BAA-1098 / SB2B).